Here is a 173-residue protein sequence, read N- to C-terminus: Protein TraS (173 aa).

Its subcellular location is the cell inner membrane. Functionally, involved in surface exclusion. This is Protein TraS (traS) from Escherichia coli (strain K12).